Consider the following 580-residue polypeptide: 2-succinyl-5-enolpyruvyl-6-hydroxy-3-cyclohexene-1-carboxylate synthase (580 aa).

This sequence belongs to the TPP enzyme family. MenD subfamily. As to quaternary structure, homodimer. Requires Mg(2+) as cofactor. The cofactor is Mn(2+). Thiamine diphosphate is required as a cofactor.

It catalyses the reaction isochorismate + 2-oxoglutarate + H(+) = 5-enolpyruvoyl-6-hydroxy-2-succinyl-cyclohex-3-ene-1-carboxylate + CO2. Its pathway is quinol/quinone metabolism; 1,4-dihydroxy-2-naphthoate biosynthesis; 1,4-dihydroxy-2-naphthoate from chorismate: step 2/7. The protein operates within quinol/quinone metabolism; menaquinone biosynthesis. Functionally, catalyzes the thiamine diphosphate-dependent decarboxylation of 2-oxoglutarate and the subsequent addition of the resulting succinic semialdehyde-thiamine pyrophosphate anion to isochorismate to yield 2-succinyl-5-enolpyruvyl-6-hydroxy-3-cyclohexene-1-carboxylate (SEPHCHC). The protein is 2-succinyl-5-enolpyruvyl-6-hydroxy-3-cyclohexene-1-carboxylate synthase of Listeria innocua serovar 6a (strain ATCC BAA-680 / CLIP 11262).